Reading from the N-terminus, the 1578-residue chain is Neurexin-3 (1578 aa).

The first 27 residues, 1 to 27 (MSFTLHSVFFTLKVSSFLGSLVGLCLG), serve as a signal peptide directing secretion. Residues 28 to 202 (LEFMGLPNQW…SVQLEAEGPC (175 aa)) enclose the Laminin G-like 1 domain. Residues 28–1503 (LEFMGLPNQW…EVIRESNSTT (1476 aa)) lie on the Extracellular side of the membrane. Residues Asn58 and Asn105 are each glycosylated (N-linked (GlcNAc...) asparagine). The EGF-like 1 domain occupies 198 to 235 (AEGPCGERPCENGGICFLLDGHPTCDCSTTGYGGTLCS). 3 cysteine pairs are disulfide-bonded: Cys202/Cys213, Cys207/Cys222, and Cys224/Cys234. Laminin G-like domains follow at residues 260-444 (ENVA…VFKC) and 451-643 (DPIN…KSSC). Ca(2+) contacts are provided by Asp308, Leu325, and Met378. 5 disulfides stabilise this stretch: Cys408–Cys444, Cys614–Cys643, Cys651–Cys662, Cys656–Cys671, and Cys673–Cys683. In terms of domain architecture, EGF-like 2 spans 647 to 684 (SAKQCDSYPCKNNAVCKDGWNRFICDCTGTGYWGRTCE). Laminin G-like domains follow at residues 689 to 861 (ILSY…IDYC) and 875 to 1050 (DPVT…DRGC). Ca(2+)-binding residues include Asp736 and Leu753. N-linked (GlcNAc...) asparagine glycosylation occurs at Asn761. Arg811 provides a ligand contact to Ca(2+). Intrachain disulfides connect Cys1022/Cys1050, Cys1057/Cys1068, Cys1062/Cys1077, and Cys1079/Cys1089. In terms of domain architecture, EGF-like 3 spans 1053 to 1090 (PSTTCQEDSCANQGVCMQQWEGFTCDCSMTSYSGNQCN). Positions 1094 to 1294 (ATYIFGKSGG…NPNIKINGSV (201 aa)) constitute a Laminin G-like 6 domain. The Ca(2+) site is built by Asp1146 and Ile1163. Asn1193 is a glycosylation site (N-linked (GlcNAc...) asparagine). Residues Ile1245 and Asn1247 each contribute to the Ca(2+) site. Asn1291 and Asn1335 each carry an N-linked (GlcNAc...) asparagine glycan. The segment at 1328–1352 (ATTTTRKNRSTASIQPTSDDLVSSA) is disordered. Residues 1337 to 1352 (STASIQPTSDDLVSSA) are compositionally biased toward polar residues. Residue Ser1351 is glycosylated (O-linked (Xyl...) (heparan sulfate) serine). Residue Asn1500 is glycosylated (N-linked (GlcNAc...) asparagine). Residues 1504–1524 (GMVVGIVAAAALCILILLYAM) traverse the membrane as a helical segment. Over 1525–1578 (YKYRNRDEGSYQVDETRNYISNSAQSNGTLMKEKQASSKSGHKKQKNKDKEYYV) the chain is Cytoplasmic. The segment at 1546–1578 (NSAQSNGTLMKEKQASSKSGHKKQKNKDKEYYV) is disordered.

The protein belongs to the neurexin family. The laminin G-like domain 2 binds to NXPH1. Isoform 8/alpha-4B binds to alpha-dystroglycan. The cytoplasmic C-terminal region binds to CASK. Specific isoforms bind neuroligins NLGN1, NLGN2 and NLGN3. Interacts with CLSTN3. Post-translationally, O-glycosylated; contains heparan sulfate. Heparan sulfate attachment is required for synapse development by mediating interactions with neuroligins. Brain.

It is found in the presynaptic cell membrane. In terms of biological role, neuronal cell surface protein that may be involved in cell recognition and cell adhesion. May mediate intracellular signaling. The polypeptide is Neurexin-3 (Nrxn3) (Rattus norvegicus (Rat)).